The chain runs to 194 residues: Inosine triphosphate pyrophosphatase (194 aa).

8–13 (TGNANK) lines the ITP pocket. Glu47 contacts Mg(2+). ITP is bound by residues Lys59, 75-76 (DT), Lys92, 151-154 (FGWD), Lys174, and 179-180 (HR).

The protein belongs to the HAM1 NTPase family. Homodimer. Mg(2+) serves as cofactor. Mn(2+) is required as a cofactor.

The protein localises to the cytoplasm. Its subcellular location is the nucleus. The enzyme catalyses ITP + H2O = IMP + diphosphate + H(+). The catalysed reaction is dITP + H2O = dIMP + diphosphate + H(+). It catalyses the reaction XTP + H2O = XMP + diphosphate + H(+). Its function is as follows. Pyrophosphatase that hydrolyzes non-canonical purine nucleotides such as inosine triphosphate (ITP), deoxyinosine triphosphate (dITP) or xanthosine 5'-triphosphate (XTP) to their respective monophosphate derivatives. The enzyme does not distinguish between the deoxy- and ribose forms. Probably excludes non-canonical purines from RNA and DNA precursor pools, thus preventing their incorporation into RNA and DNA and avoiding chromosomal lesions. The sequence is that of Inosine triphosphate pyrophosphatase from Scheffersomyces stipitis (strain ATCC 58785 / CBS 6054 / NBRC 10063 / NRRL Y-11545) (Yeast).